The sequence spans 606 residues: Phosphoenolpyruvate carboxykinase [GTP] (606 aa).

Residues arginine 79 and 218–220 (YGG) contribute to the substrate site. Mn(2+) is bound by residues lysine 227 and histidine 247. A substrate-binding site is contributed by serine 269. 270 to 275 (ACGKTN) provides a ligand contact to GTP. The active site involves cysteine 271. Aspartate 294 is a binding site for Mn(2+). 384–386 (NSR) provides a ligand contact to substrate. Residues arginine 386, arginine 417, and 512 to 515 (FGEN) contribute to the GTP site.

It belongs to the phosphoenolpyruvate carboxykinase [GTP] family. In terms of assembly, monomer. The cofactor is Mn(2+).

The protein localises to the cytoplasm. It catalyses the reaction oxaloacetate + GTP = phosphoenolpyruvate + GDP + CO2. The protein operates within carbohydrate biosynthesis; gluconeogenesis. Its function is as follows. Catalyzes the conversion of oxaloacetate (OAA) to phosphoenolpyruvate (PEP), the rate-limiting step in the metabolic pathway that produces glucose from lactate and other precursors derived from the citric acid cycle. The sequence is that of Phosphoenolpyruvate carboxykinase [GTP] from Corynebacterium jeikeium (strain K411).